Here is a 344-residue protein sequence, read N- to C-terminus: Dimethyladenosine transferase 1, mitochondrial (344 aa).

The transit peptide at 1-27 (MATPGALAKFRLPPLPTIGEIVKLFNL) directs the protein to the mitochondrion. The S-adenosyl-L-methionine site is built by N36, L38, G63, E85, K86, D111, I112, and N141.

Belongs to the class I-like SAM-binding methyltransferase superfamily. rRNA adenine N(6)-methyltransferase family. KsgA subfamily.

The protein resides in the mitochondrion. The catalysed reaction is adenosine(N)/adenosine(N+1) in rRNA + 4 S-adenosyl-L-methionine = N(6)-dimethyladenosine(N)/N(6)-dimethyladenosine(N+1) in rRNA + 4 S-adenosyl-L-homocysteine + 4 H(+). Mitochondrial methyltransferase which uses S-adenosyl methionine to dimethylate two highly conserved adjacent adenosine residues (A1583 and A1584) within the loop of helix 45 at the 3-prime end of 12S rRNA, thereby regulating the assembly or stability of the small subunit of the mitochondrial ribosome. Also required for basal transcription of mitochondrial DNA, probably via its interaction with POLRMT and TFAM. Stimulates transcription independently of the methyltransferase activity. The protein is Dimethyladenosine transferase 1, mitochondrial (tfb1m.L) of Xenopus laevis (African clawed frog).